Here is an 87-residue protein sequence, read N- to C-terminus: Large ribosomal subunit protein bL27 (87 aa).

A compositionally biased stretch (polar residues) spans 1 to 11; that stretch reads MASKASGGSTR. The disordered stretch occupies residues 1–21; it reads MASKASGGSTRNGRDSNSKRL.

It belongs to the bacterial ribosomal protein bL27 family.

In Hydrogenobaculum sp. (strain Y04AAS1), this protein is Large ribosomal subunit protein bL27.